Reading from the N-terminus, the 545-residue chain is Dual specificity calcium/calmodulin-dependent 3',5'-cyclic nucleotide phosphodiesterase 1A (545 aa).

Calmodulin-binding regions lie at residues 24–44 and 114–137; these read TEKM…QLEK and EKPK…MYRK. One can recognise a PDEase domain in the interval 142–522; the sequence is VGLTYPAAVI…ERWKELAAQG (381 aa). Histidine 219 functions as the Proton donor in the catalytic mechanism. Zn(2+) contacts are provided by histidine 223, histidine 259, aspartate 260, and aspartate 366. Residue aspartate 260 participates in Mg(2+) binding. Residues 526–545 form a disordered region; it reads LHKNSEELGNTEEKHADTRP.

The protein belongs to the cyclic nucleotide phosphodiesterase family. PDE1 subfamily. In terms of assembly, homodimer. Interacts with YWHAZ. The cofactor is Zn(2+). Mg(2+) serves as cofactor. Expressed in brain, kidney and testis.

The protein localises to the cell projection. It is found in the cilium. Its subcellular location is the flagellum. It catalyses the reaction a nucleoside 3',5'-cyclic phosphate + H2O = a nucleoside 5'-phosphate + H(+). The catalysed reaction is 3',5'-cyclic GMP + H2O = GMP + H(+). It carries out the reaction 3',5'-cyclic AMP + H2O = AMP + H(+). Type I PDE are activated by the binding of calmodulin in the presence of Ca(2+). Its activity is regulated as follows. Activated by the binding of calmodulin in the presence of Ca(2+). Functionally, calcium/calmodulin-dependent cyclic nucleotide phosphodiesterase with a dual specificity for the second messengers cGMP and cAMP, which are key regulators of many important physiological processes. Has a higher efficiency with cGMP compared to cAMP. The polypeptide is Dual specificity calcium/calmodulin-dependent 3',5'-cyclic nucleotide phosphodiesterase 1A (Mus musculus (Mouse)).